A 339-amino-acid chain; its full sequence is DNA repair protein RAD51 homolog 1 (339 aa).

The disordered stretch occupies residues 1-23 (MAMQVQFEASTDTSAEEESFGPE). One can recognise a HhH domain in the interval 48-77 (TVESVAHAPKKELLNIKGISEAKADKILAE). 127-134 (GEFRTGKT) is a binding site for ATP.

Belongs to the RecA family. RAD51 subfamily. In terms of assembly, forms linear homooligomers, giving rise to a RAD51 nucleoprotein filament, which is essential for strand-pairing reactions during DNA recombination. As to expression, expressed at high levels in lymphoid and reproductive organs.

The protein localises to the nucleus. It localises to the cytoplasm. Its subcellular location is the chromosome. Functionally, plays an important role in homologous strand exchange, a key step in DNA repair through homologous recombination (HR). Binds to single-stranded DNA in an ATP-dependent manner to form nucleoprotein filaments which are essential for the homology search and strand exchange. Catalyzes the recognition of homology and strand exchange between homologous DNA partners to form a joint molecule between a processed DNA break and the repair template. Recruited to resolve stalled replication forks during replication stress. Also involved in interstrand cross-link repair. In Gallus gallus (Chicken), this protein is DNA repair protein RAD51 homolog 1 (RAD51A).